We begin with the raw amino-acid sequence, 372 residues long: Septin-1 (372 aa).

Residues 27-301 (KGFDFTLMVA…EGYRARCLQS (275 aa)) form the Septin-type G domain. The interval 37-44 (GESGLGKS) is G1 motif. GTP-binding positions include 37–44 (GESGLGKS), Thr-71, Gly-97, and 176–184 (KADALMPQE). The interval 94-97 (DTPG) is G3 motif. The segment at 175-178 (GKAD) is G4 motif. At Ser-211 the chain carries Phosphoserine. GTP contacts are provided by Gly-234 and Arg-250. A Phosphoserine; by AURKB modification is found at Ser-253. Thr-256 is modified (phosphothreonine). Phosphoserine; by AURKB is present on residues Ser-312 and Ser-320. A disordered region spans residues 352-372 (LEKMQAQMQQSQAQGEQSDAL). Residues 355–372 (MQAQMQQSQAQGEQSDAL) are compositionally biased toward low complexity.

Belongs to the TRAFAC class TrmE-Era-EngA-EngB-Septin-like GTPase superfamily. Septin GTPase family. Septins polymerize into heterooligomeric protein complexes that form filaments, and can associate with cellular membranes, actin filaments and microtubules. GTPase activity is required for filament formation. Interacts with AURKB. In terms of tissue distribution, expressed at high levels in lymphoid and hematopoietic tissues.

It localises to the cytoplasm. The protein resides in the cytoskeleton. It is found in the microtubule organizing center. The protein localises to the centrosome. Its subcellular location is the midbody. Filament-forming cytoskeletal GTPase. May play a role in cytokinesis (Potential). This is Septin-1 from Homo sapiens (Human).